The chain runs to 242 residues: 3-oxoacyl-[acyl-carrier-protein] reductase FabG (242 aa).

Residues 9–12 (GSSR), Arg34, 60–61 (DV), and Asn87 each bind NADP(+). Ser140 is a binding site for substrate. Tyr153 functions as the Proton acceptor in the catalytic mechanism. NADP(+) contacts are provided by residues 153 to 157 (YSASK) and Ile186.

This sequence belongs to the short-chain dehydrogenases/reductases (SDR) family. Homotetramer.

It catalyses the reaction a (3R)-hydroxyacyl-[ACP] + NADP(+) = a 3-oxoacyl-[ACP] + NADPH + H(+). It functions in the pathway lipid metabolism; fatty acid biosynthesis. Functionally, catalyzes the NADPH-dependent reduction of beta-ketoacyl-ACP substrates to beta-hydroxyacyl-ACP products, the first reductive step in the elongation cycle of fatty acid biosynthesis. The polypeptide is 3-oxoacyl-[acyl-carrier-protein] reductase FabG (fabG) (Aggregatibacter actinomycetemcomitans (Actinobacillus actinomycetemcomitans)).